The chain runs to 208 residues: Golgi apparatus membrane protein TVP23 homolog B (208 aa).

Met1 carries the N-acetylmethionine modification. A compositionally biased stretch (acidic residues) spans 1-21; the sequence is MLQQDSNDDTEDVSLFDAEEE. Residues 1 to 27 are disordered; it reads MLQQDSNDDTEDVSLFDAEEETTNRPK. 4 helical membrane passes run 34 to 53, 54 to 72, 126 to 146, and 152 to 172; these read PVAS…VYLL, CELF…ILLL, IFWL…FSAL, and KWLA…YGYI.

The protein belongs to the TVP23 family.

The protein localises to the membrane. The chain is Golgi apparatus membrane protein TVP23 homolog B (TVP23B) from Bos taurus (Bovine).